The chain runs to 448 residues: Cysteine--tRNA ligase (448 aa).

Cys-29 provides a ligand contact to Zn(2+). The 'HIGH' region motif lies at 31 to 41 (PTVYDTAHIGN). Residues 79 to 91 (ATTGADRGADQAH) show a composition bias toward basic and acidic residues. A disordered region spans residues 79–106 (ATTGADRGADQAHRGPLPRRHGPLNAAP). Cys-206 and Glu-235 together coordinate Zn(2+). The short motif at 265 to 269 (RMSKS) is the 'KMSKS' region element. An ATP-binding site is contributed by Lys-268.

This sequence belongs to the class-I aminoacyl-tRNA synthetase family. In terms of assembly, monomer. Zn(2+) is required as a cofactor.

The protein resides in the cytoplasm. The catalysed reaction is tRNA(Cys) + L-cysteine + ATP = L-cysteinyl-tRNA(Cys) + AMP + diphosphate. The protein is Cysteine--tRNA ligase (cysS) of Azospirillum brasilense.